An 85-amino-acid polypeptide reads, in one-letter code: Alpha-toxin Ac2 (85 aa).

The signal sequence occupies residues 1-19; it reads MNYLVMISLALLFMTGVES. The LCN-type CS-alpha/beta domain occupies 21 to 83; the sequence is KDGYIVDDRN…VRTKGPGRCK (63 aa). 4 cysteine pairs are disulfide-bonded: Cys31–Cys82, Cys35–Cys55, Cys41–Cys65, and Cys45–Cys67. Lys83 carries the lysine amide modification.

This sequence belongs to the long (4 C-C) scorpion toxin superfamily. Sodium channel inhibitor family. Alpha subfamily. As to expression, expressed by the venom gland.

It localises to the secreted. In terms of biological role, alpha toxins bind voltage-independently at site-3 of sodium channels (Nav) and inhibit the inactivation of the activated channels, thereby blocking neuronal transmission. The protein is Alpha-toxin Ac2 of Androctonus crassicauda (Arabian fat-tailed scorpion).